The sequence spans 136 residues: Sec-independent protein translocase protein TatB (136 aa).

Residues Met1–Gly21 traverse the membrane as a helical segment. Residues Tyr89–Ser136 are disordered. The span at Thr99–Pro115 shows a compositional bias: polar residues. The segment covering Ser122 to Ser136 has biased composition (basic and acidic residues).

This sequence belongs to the TatB family. As to quaternary structure, the Tat system comprises two distinct complexes: a TatABC complex, containing multiple copies of TatA, TatB and TatC subunits, and a separate TatA complex, containing only TatA subunits. Substrates initially bind to the TatABC complex, which probably triggers association of the separate TatA complex to form the active translocon.

It localises to the cell inner membrane. Part of the twin-arginine translocation (Tat) system that transports large folded proteins containing a characteristic twin-arginine motif in their signal peptide across membranes. Together with TatC, TatB is part of a receptor directly interacting with Tat signal peptides. TatB may form an oligomeric binding site that transiently accommodates folded Tat precursor proteins before their translocation. This is Sec-independent protein translocase protein TatB from Hahella chejuensis (strain KCTC 2396).